Here is a 307-residue protein sequence, read N- to C-terminus: Putative serpin A13 (307 aa).

A signal peptide spans 1 to 21 (MEASRWWLLVTVLMAGAHCVA). N-linked (GlcNAc...) asparagine glycosylation is found at asparagine 150 and asparagine 250.

This sequence belongs to the serpin family.

The protein resides in the secreted. The polypeptide is Putative serpin A13 (SERPINA13P) (Homo sapiens (Human)).